The primary structure comprises 232 residues: Sec-independent protein translocase protein TatB (232 aa).

A helical transmembrane segment spans residues 1–21 (MFDIGFGELMLLFVIGLVVLG). Disordered regions lie at residues 108–129 (EPHTIHNPLVTDPEALHDGVTP) and 176–232 (AAST…NNDR). Composition is skewed to low complexity over residues 189–203 (ADSAANLATQAATPA) and 214–232 (RAATATGPASSTSPLNNDR).

It belongs to the TatB family. As to quaternary structure, the Tat system comprises two distinct complexes: a TatABC complex, containing multiple copies of TatA, TatB and TatC subunits, and a separate TatA complex, containing only TatA subunits. Substrates initially bind to the TatABC complex, which probably triggers association of the separate TatA complex to form the active translocon.

Its subcellular location is the cell inner membrane. In terms of biological role, part of the twin-arginine translocation (Tat) system that transports large folded proteins containing a characteristic twin-arginine motif in their signal peptide across membranes. Together with TatC, TatB is part of a receptor directly interacting with Tat signal peptides. TatB may form an oligomeric binding site that transiently accommodates folded Tat precursor proteins before their translocation. In Sodalis glossinidius (strain morsitans), this protein is Sec-independent protein translocase protein TatB.